A 473-amino-acid polypeptide reads, in one-letter code: Glutamine synthetase (473 aa).

The GS beta-grasp domain maps to 15–100 (ENIKIIDLKF…ICSIKEPRTG (86 aa)). Residues 107 to 473 (PRTIAAKAVE…PYEFSLYYDC (367 aa)) form the GS catalytic domain. Glu132 is a binding site for Mn(2+). Glu134 is a Mg(2+) binding site. Residue Glu210 coordinates ATP. Residues Glu215 and Glu223 each contribute to the Mg(2+) site. L-glutamate contacts are provided by residues 267-268 (NG) and Gly268. His272 serves as a coordination point for Mg(2+). Residues 274–276 (HQS) and Ser276 contribute to the ATP site. 3 residues coordinate L-glutamate: Arg324, Glu330, and Arg342. Arg342, Arg347, and Lys356 together coordinate ATP. Glu361 contacts Mn(2+). An L-glutamate-binding site is contributed by Arg363. The residue at position 401 (Tyr401) is an O-AMP-tyrosine.

Belongs to the glutamine synthetase family. As to quaternary structure, oligomer of 12 subunits arranged in the form of two hexagons. It depends on Mg(2+) as a cofactor.

It is found in the cytoplasm. The enzyme catalyses L-glutamate + NH4(+) + ATP = L-glutamine + ADP + phosphate + H(+). With respect to regulation, inhibited by ADP (90%), AMP (80%), alanine (52%) and aspartate (41%). The activity of this enzyme could be controlled by adenylation under conditions of abundant glutamine. Functionally, involved in nitrogen metabolism via ammonium assimilation. Catalyzes the ATP-dependent biosynthesis of glutamine from glutamate and ammonia. The protein is Glutamine synthetase of Synechocystis sp. (strain ATCC 27184 / PCC 6803 / Kazusa).